The sequence spans 506 residues: Spindle pole body protein CSA6 (506 aa).

4 disordered regions span residues 18 to 121 (SPIK…PNEN), 252 to 276 (EKHNNPQDSPPKVKIATPDPEVETQ), 329 to 429 (PSSP…YSIR), and 447 to 470 (KNDQKDTNSPEESNTDGKEEEEKV). Basic and acidic residues predominate over residues 38–48 (IDLRDYMDRQK). Residues 50 to 59 (SRNYSDSEYT) show a composition bias toward polar residues. Residues 63 to 72 (IKREKPETKQ) are compositionally biased toward basic and acidic residues. The segment covering 94–119 (PTKNYSQHVMQERSAPNSPQKKSLPN) has biased composition (polar residues). Composition is skewed to polar residues over residues 330 to 353 (SSPNHQTQPVFQSTPQSKVESVNL) and 361 to 389 (QPSHVSSNSQQNLSDKSRTSIPSRDNPSP). Basic and acidic residues-rich tracts occupy residues 412–422 (EWTREREERDG) and 461–470 (TDGKEEEEKV).

Its subcellular location is the cytoplasm. It localises to the cytoskeleton. The protein resides in the microtubule organizing center. The protein localises to the spindle pole body. In terms of biological role, plays a role in mitotic spindle pole body organization, possibly at the point of spindle pole body separation. Required for mitotic exit. The polypeptide is Spindle pole body protein CSA6 (Candida tropicalis (strain ATCC MYA-3404 / T1) (Yeast)).